We begin with the raw amino-acid sequence, 208 residues long: Small ribosomal subunit protein uS4 (208 aa).

An S4 RNA-binding domain is found at 98–159 (RRLDNVAYRL…KSRKVAAISE (62 aa)).

The protein belongs to the universal ribosomal protein uS4 family. As to quaternary structure, part of the 30S ribosomal subunit. Contacts protein S5. The interaction surface between S4 and S5 is involved in control of translational fidelity.

Functionally, one of the primary rRNA binding proteins, it binds directly to 16S rRNA where it nucleates assembly of the body of the 30S subunit. In terms of biological role, with S5 and S12 plays an important role in translational accuracy. This is Small ribosomal subunit protein uS4 from Citrifermentans bemidjiense (strain ATCC BAA-1014 / DSM 16622 / JCM 12645 / Bem) (Geobacter bemidjiensis).